A 178-amino-acid chain; its full sequence is Large ribosomal subunit protein uL6 (178 aa).

This sequence belongs to the universal ribosomal protein uL6 family. As to quaternary structure, part of the 50S ribosomal subunit.

This protein binds to the 23S rRNA, and is important in its secondary structure. It is located near the subunit interface in the base of the L7/L12 stalk, and near the tRNA binding site of the peptidyltransferase center. This is Large ribosomal subunit protein uL6 from Streptococcus agalactiae serotype V (strain ATCC BAA-611 / 2603 V/R).